The primary structure comprises 144 residues: Putative 2'-deoxynucleoside 5'-phosphate N-hydrolase 1 (144 aa).

Substrate contacts are provided by residues 7–13, Tyr-22, His-39, Glu-83, and 107–109; these read YFCGSIR and SGM.

The protein belongs to the 2'-deoxynucleoside 5'-phosphate N-hydrolase 1 family. In terms of assembly, monomer and homodimer.

Its subcellular location is the cytoplasm. The protein localises to the nucleus. The catalysed reaction is a pyrimidine 2'-deoxyribonucleoside 5'-phosphate + H2O = a pyrimidine nucleobase + 2-deoxy-D-ribose 5-phosphate. The enzyme catalyses a purine 2'-deoxyribonucleoside 5'-phosphate + H2O = a purine nucleobase + 2-deoxy-D-ribose 5-phosphate. Catalyzes the cleavage of the N-glycosidic bond of deoxyribonucleoside 5'-monophosphates to yield deoxyribose 5-phosphate and a purine or pyrimidine base. In Trichoplax adhaerens (Trichoplax reptans), this protein is Putative 2'-deoxynucleoside 5'-phosphate N-hydrolase 1.